The primary structure comprises 375 residues: All-trans-retinol dehydrogenase [NAD(+)] ADH1B (375 aa).

Ser2 is modified (N-acetylserine). A Phosphoserine modification is found at Ser23. Tyr35 carries the phosphotyrosine modification. Residues Cys47, His68, Cys98, Cys101, Cys104, Cys112, and Cys175 each contribute to the Zn(2+) site. Residues 200–205, Asp224, Lys229, 293–295, and Arg370 contribute to the NAD(+) site; these read GLGGVG and VGV.

This sequence belongs to the zinc-containing alcohol dehydrogenase family. Homodimer or heterodimer of closely related subunits. Zn(2+) is required as a cofactor.

It localises to the cytoplasm. The catalysed reaction is all-trans-retinol + NAD(+) = all-trans-retinal + NADH + H(+). The enzyme catalyses all-trans-4-hydroxyretinol + NAD(+) = all-trans-4-hydroxyretinal + NADH + H(+). It catalyses the reaction all-trans-4-oxoretinol + NAD(+) = all-trans-4-oxoretinal + NADH + H(+). Catalyzes the NAD-dependent oxidation of all-trans-retinol and its derivatives such as all-trans-4-hydroxyretinol and may participate in retinoid metabolism. In vitro can also catalyze the NADH-dependent reduction of all-trans-retinal and its derivatives such as all-trans-4-oxoretinal. Catalyzes in the oxidative direction with higher efficiency. Has the same affinity for all-trans-4-hydroxyretinol and all-trans-4-oxoretinal. This Pan troglodytes (Chimpanzee) protein is All-trans-retinol dehydrogenase [NAD(+)] ADH1B.